The following is a 739-amino-acid chain: DNA ligase (739 aa).

The tract at residues 1–29 is disordered; it reads MTANRPALPTRDKAVSDLSATEASDEHAA. Residues 51–55, 100–101, and Glu134 contribute to the NAD(+) site; these read DADYD and SL. Lys136 serves as the catalytic N6-AMP-lysine intermediate. Positions 157, 194, 311, and 335 each coordinate NAD(+). Zn(2+) is bound by residues Cys440, Cys443, Cys464, and Cys470. The tract at residues 592–612 is disordered; the sequence is PTEMEEASEETPPTRRRKPQG. Positions 662–739 constitute a BRCT domain; it reads ASTSPVSGKT…TEDEWFDLVG (78 aa).

This sequence belongs to the NAD-dependent DNA ligase family. LigA subfamily. The cofactor is Mg(2+). Mn(2+) serves as cofactor.

The catalysed reaction is NAD(+) + (deoxyribonucleotide)n-3'-hydroxyl + 5'-phospho-(deoxyribonucleotide)m = (deoxyribonucleotide)n+m + AMP + beta-nicotinamide D-nucleotide.. Its function is as follows. DNA ligase that catalyzes the formation of phosphodiester linkages between 5'-phosphoryl and 3'-hydroxyl groups in double-stranded DNA using NAD as a coenzyme and as the energy source for the reaction. It is essential for DNA replication and repair of damaged DNA. The protein is DNA ligase of Azorhizobium caulinodans (strain ATCC 43989 / DSM 5975 / JCM 20966 / LMG 6465 / NBRC 14845 / NCIMB 13405 / ORS 571).